The chain runs to 120 residues: V-type proton ATPase subunit F (120 aa).

The protein belongs to the V-ATPase F subunit family. As to quaternary structure, V-ATPase is a heteromultimeric enzyme composed of a peripheral catalytic V1 complex (components A to H) attached to an integral membrane V0 proton pore complex (components: a, c, c', c'' and d).

Subunit of the peripheral V1 complex of vacuolar ATPase essential for assembly or catalytic function. V-ATPase is responsible for acidifying a variety of intracellular compartments in eukaryotic cells. The polypeptide is V-type proton ATPase subunit F (vatF) (Dictyostelium discoideum (Social amoeba)).